Here is a 498-residue protein sequence, read N- to C-terminus: ATP synthase subunit beta, chloroplastic (498 aa).

172-179 provides a ligand contact to ATP; that stretch reads GGAGVGKT.

It belongs to the ATPase alpha/beta chains family. In terms of assembly, F-type ATPases have 2 components, CF(1) - the catalytic core - and CF(0) - the membrane proton channel. CF(1) has five subunits: alpha(3), beta(3), gamma(1), delta(1), epsilon(1). CF(0) has four main subunits: a(1), b(1), b'(1) and c(9-12).

The protein localises to the plastid. It localises to the chloroplast thylakoid membrane. The catalysed reaction is ATP + H2O + 4 H(+)(in) = ADP + phosphate + 5 H(+)(out). In terms of biological role, produces ATP from ADP in the presence of a proton gradient across the membrane. The catalytic sites are hosted primarily by the beta subunits. The chain is ATP synthase subunit beta, chloroplastic from Drimys granadensis.